A 358-amino-acid chain; its full sequence is Protein SGT1 homolog B (358 aa).

TPR repeat units lie at residues 2 to 35 (AKEL…DPNC), 37 to 69 (AFFA…EPTL), and 70 to 103 (AKAY…APNE). The region spanning 157–246 (KPMFRHEFYQ…AEIITWASLE (90 aa)) is the CS domain. Residues 255–275 (PKPNVSSALSQRPVYPSSKPA) are disordered. One can recognise an SGS domain in the interval 268-358 (VYPSSKPAKD…DGMELKKWEY (91 aa)).

Belongs to the SGT1 family. Interacts with RAR1 and HSP90-2. Interacts (via SGS domain) with HSC70-1 and HSC70-3.

The protein resides in the cytoplasm. It is found in the nucleus. Functionally, involved in plant innate immunity. Essential for race-specific resistance conferred by multiple R genes, including RPP7, recognizing different oomycete pathogen isolates like avirulent Hyaloperonospora arabidopsidis (downy mildew). Contributes additively with RAR1 to RPP5-dependent resistance. Not required for RPM1, RPS2, RPS4 and RPS5-mediated resistance. Functions as a negative regulator of RPS5 accumulation by assisting its degradation. May be involved in heat shock response by associating with HSC70-1 chaperone. Required for the SCF(TIR1)-mediated degradation of Aux/IAA proteins, but maybe not for SCF(TIR1) assembly or binding to its Aux/IAA substrates. Probably required for SCF-mediated ubiquitination, by coupling HSP90 to SCF complex for ubiquitination of HSP90 client proteins. Required for the coronatine/jasmonic acid-mediated signal transduction pathway. This Arabidopsis thaliana (Mouse-ear cress) protein is Protein SGT1 homolog B.